Reading from the N-terminus, the 138-residue chain is Putative nickel-responsive regulator (138 aa).

Positions 78, 89, 91, and 97 each coordinate Ni(2+).

It belongs to the transcriptional regulatory CopG/NikR family. Requires Ni(2+) as cofactor.

Functionally, transcriptional regulator. The chain is Putative nickel-responsive regulator from Desulfovibrio desulfuricans (strain ATCC 27774 / DSM 6949 / MB).